A 128-amino-acid polypeptide reads, in one-letter code: DNA-directed RNA polymerase subunit omega (128 aa).

The segment at 87–106 (ARSSQAAPKSAPGQEIGKSF) is disordered.

This sequence belongs to the RNA polymerase subunit omega family. As to quaternary structure, the RNAP catalytic core consists of 2 alpha, 1 beta, 1 beta' and 1 omega subunit. When a sigma factor is associated with the core the holoenzyme is formed, which can initiate transcription.

It carries out the reaction RNA(n) + a ribonucleoside 5'-triphosphate = RNA(n+1) + diphosphate. Promotes RNA polymerase assembly. Latches the N- and C-terminal regions of the beta' subunit thereby facilitating its interaction with the beta and alpha subunits. This chain is DNA-directed RNA polymerase subunit omega, found in Anaplasma marginale (strain St. Maries).